Reading from the N-terminus, the 509-residue chain is Cobyric acid synthase (509 aa).

Residues 262-459 (EIKVGIIKLP…IHGIFENDNW (198 aa)) form the GATase cobBQ-type domain. Residue C343 is the Nucleophile of the active site. H451 is a catalytic residue.

The protein belongs to the CobB/CobQ family. CobQ subfamily.

It participates in cofactor biosynthesis; adenosylcobalamin biosynthesis. Functionally, catalyzes amidations at positions B, D, E, and G on adenosylcobyrinic A,C-diamide. NH(2) groups are provided by glutamine, and one molecule of ATP is hydrogenolyzed for each amidation. The polypeptide is Cobyric acid synthase (Prochlorococcus marinus (strain AS9601)).